Here is a 1550-residue protein sequence, read N- to C-terminus: Protein TIME FOR COFFEE (1550 aa).

Disordered regions lie at residues 1–191 (MDRN…PVSP), 207–304 (VPRK…PVAV), 325–505 (TSKQ…SERG), 708–736 (QGSV…TAQR), 779–805 (RPPN…SATP), 859–1023 (FNGS…KAGV), 1086–1130 (ASLE…QSIA), 1163–1196 (ALPQ…SQQP), 1213–1296 (AASA…SVAA), and 1321–1435 (NSKP…PKHG). A compositionally biased stretch (basic and acidic residues) spans 43–80 (EAARLRDRGGSNKKDRDRERDRDRERERERDRERDRLN). A compositionally biased stretch (acidic residues) spans 100-118 (DGGDDSSEESVNDDEEYDD). The span at 134-151 (SNNISAASFSSSLSNHHN) shows a compositional bias: low complexity. Positions 157-171 (LHHHHHSHNNNHQRK) are enriched in basic residues. Residues 241–250 (RQISSTSPAN) are compositionally biased toward polar residues. The segment covering 292–301 (KSSSSKLSSP) has biased composition (low complexity). Positions 348-366 (RVSSPISNPQTLPQSSITL) are enriched in polar residues. Low complexity predominate over residues 367 to 379 (AANSSSSNVSAIA). The segment covering 409 to 432 (SKSQVPFSNQLKSSGSGEGNSSVL) has biased composition (polar residues). Composition is skewed to basic and acidic residues over residues 447–461 (DSEK…DETI) and 473–490 (SDGE…KFEI). 3 stretches are compositionally biased toward polar residues: residues 713-736 (GRSS…TAQR), 783-803 (SGIT…SASA), and 884-992 (LTGQ…NLGL). Positions 1112 to 1126 (SGGGAIGKTSGGNGG) are enriched in gly residues. Polar residues predominate over residues 1164–1173 (LPQSSGSLPT). The segment covering 1174 to 1195 (SHHQQLLQQQQQQHMQRSQSQQ) has biased composition (low complexity). The span at 1234–1253 (NMTTSPAGTTKFANANSGFP) shows a compositional bias: polar residues. The segment covering 1254–1273 (QNLVQSSSNQVQSQQWKNNS) has biased composition (low complexity). Polar residues-rich tracts occupy residues 1274–1296 (PRTT…SVAA), 1321–1342 (NSKP…NHQA), and 1351–1360 (SPSTSSVSKN). Low complexity predominate over residues 1361–1382 (ASGSPRTTASASSAANKGGQAS). 2 stretches are compositionally biased toward polar residues: residues 1383-1397 (TTTH…NLQP) and 1405-1419 (GGRN…NPTT). The span at 1420–1435 (SSGSKSQQQQQLPKHG) shows a compositional bias: low complexity.

As to quaternary structure, interacts with MYC2.

It is found in the nucleus. Its function is as follows. Regulator of normal clock function. Acts in the mid to late night. Contributes to the amplitude of circadian clocks. May act on the transcriptional induction of LATE ELONGATED HYPOCOTYL (LHY). Inhibits MYC2 protein accumulation, acting as a negative factor in the JA-signaling pathway. This is Protein TIME FOR COFFEE (TIC) from Arabidopsis thaliana (Mouse-ear cress).